Reading from the N-terminus, the 429-residue chain is METTQTSTIASKDSRSAWRKTDTMWMLGLYGTAIGAGVLFLPINAGVGGMIPLIIMAILAFPMTFFAHRGLTRFVLSGKNPGEDITEVVEEHFGIGAGKLITLLYFFAIYPILLVYSVAITNTVESFMSHQLGMTPPPRAILSLILIVGMMTIVRFGEQMIVKAMSILVFPFVGVLMLLALYLIPQWNGAALETLSLDTASATGNGLWMTLWLAIPVMVFSFNHSPIISSFAVANREEYGDMAEQKCSKILAFAHIMMVLTEMIFVFICVLSLTPADLAAAKEHNISILSYLANHFNAPVIAWMAPIIAIIAITKSFLGHYLGAREGFNGMVIKSLRGKGKSIEINKLNRITALFMLVTTWIVATLNPSILGMIETLGGPIIAMILFLMPMYAIQKVPAMRKYSGHISNVFVVVMGLIAISAIFYSLFS.

The Cytoplasmic segment spans residues 1–22 (METTQTSTIASKDSRSAWRKTD). Residues 23–43 (TMWMLGLYGTAIGAGVLFLPI) form a helical membrane-spanning segment. The Periplasmic portion of the chain corresponds to 44 to 46 (NAG). A helical membrane pass occupies residues 47-67 (VGGMIPLIIMAILAFPMTFFA). The Cytoplasmic segment spans residues 68-99 (HRGLTRFVLSGKNPGEDITEVVEEHFGIGAGK). The chain crosses the membrane as a helical span at residues 100–120 (LITLLYFFAIYPILLVYSVAI). Topologically, residues 121–140 (TNTVESFMSHQLGMTPPPRA) are periplasmic. Residues 141-161 (ILSLILIVGMMTIVRFGEQMI) form a helical membrane-spanning segment. Over 162-163 (VK) the chain is Cytoplasmic. The helical transmembrane segment at 164–184 (AMSILVFPFVGVLMLLALYLI) threads the bilayer. At 185-201 (PQWNGAALETLSLDTAS) the chain is on the periplasmic side. The helical transmembrane segment at 202-222 (ATGNGLWMTLWLAIPVMVFSF) threads the bilayer. Residues 223-249 (NHSPIISSFAVANREEYGDMAEQKCSK) are Cytoplasmic-facing. A helical membrane pass occupies residues 250 to 270 (ILAFAHIMMVLTEMIFVFICV). The Periplasmic portion of the chain corresponds to 271 to 297 (LSLTPADLAAAKEHNISILSYLANHFN). A helical membrane pass occupies residues 298–318 (APVIAWMAPIIAIIAITKSFL). The Cytoplasmic segment spans residues 319 to 347 (GHYLGAREGFNGMVIKSLRGKGKSIEINK). A helical transmembrane segment spans residues 348 to 368 (LNRITALFMLVTTWIVATLNP). Position 369 (Ser369) is a topological domain, periplasmic. Residues 370 to 390 (ILGMIETLGGPIIAMILFLMP) traverse the membrane as a helical segment. The Cytoplasmic portion of the chain corresponds to 391 to 406 (MYAIQKVPAMRKYSGH). A helical transmembrane segment spans residues 407-427 (ISNVFVVVMGLIAISAIFYSL). Topologically, residues 428–429 (FS) are periplasmic.

Belongs to the amino acid/polyamine transporter 2 family. SdaC/TdcC subfamily.

Its subcellular location is the cell inner membrane. The catalysed reaction is L-serine(in) + H(+)(in) = L-serine(out) + H(+)(out). Its function is as follows. Mediates the import of L-serine into the cell. Is energized by proton cotransport. The chain is Serine transporter SdaC (sdaC) from Shigella flexneri.